Reading from the N-terminus, the 88-residue chain is Small ribosomal subunit protein bS20 (88 aa).

It belongs to the bacterial ribosomal protein bS20 family.

Functionally, binds directly to 16S ribosomal RNA. The sequence is that of Small ribosomal subunit protein bS20 from Clostridium novyi (strain NT).